The following is a 914-amino-acid chain: Solute carrier family 12 member 9 (914 aa).

Residues 1-36 (MASENSPLLAYRLLGEEGAAFPPNGAGGSGVASARK) lie on the Cytoplasmic side of the membrane. Position 6 is a phosphoserine (serine 6). The helical transmembrane segment at 37 to 57 (LSTFLGVVVPTVLSMFSIVVF) threads the bilayer. Topologically, residues 58-72 (LRIGFVVGHAGLLQA) are extracellular. The helical transmembrane segment at 73 to 93 (LAMLLVAYVILALTVLSVCAI) threads the bilayer. At 94–119 (ATNGAVRGGGAYFMISRTLGPEVGGS) the chain is on the cytoplasmic side. The helical transmembrane segment at 120 to 140 (IGLMFYLANVCGCAVSLLGLV) threads the bilayer. Topologically, residues 141 to 167 (ESILDVFGADVTGSSGIKVLPQGYGWN) are extracellular. The chain crosses the membrane as a helical span at residues 168-188 (LLYGSLLLGLVGGVCALGAGL). Over 189–193 (YARAS) the chain is Cytoplasmic. The helical transmembrane segment at 194–214 (FLTFLLVSGSLASVLVSFVAV) threads the bilayer. Residues 215–262 (GPRNITLAPRPGTNGSSVPPRHGHFTGFNGSTLKDNLGAGYAEDYTTG) lie on the Extracellular side of the membrane. N-linked (GlcNAc...) asparagine glycans are attached at residues asparagine 218, asparagine 228, and asparagine 243. Residues 263–283 (AMMTFASVFAVLFNGCTGIMA) traverse the membrane as a helical segment. The Cytoplasmic portion of the chain corresponds to 284 to 297 (GANMSGELKDPSRA). Residues 298–318 (IPLGTIIAVAYTFFIYILLFF) form a helical membrane-spanning segment. Over 319 to 338 (LSSFTCDRALLQGDYGFFRD) the chain is Extracellular. Residues 339–359 (ISLWPPLVLIGIYATALSASM) traverse the membrane as a helical segment. Over 360–376 (SSLIGASRILHALAQDD) the chain is Cytoplasmic. The helical transmembrane segment at 377 to 399 (LFGVILAPAKVVSGGGNPWGAVL) threads the bilayer. Topologically, residues 400–416 (YSWGLVQLVLLAGKLNT) are extracellular. The helical transmembrane segment at 417–437 (LAAVVTVFYLVAYAAVDLSCL) threads the bilayer. Residues 438-466 (SLEWASAPNFRPTFSLFSWHTCLLGVASC) are Cytoplasmic-facing. Residues 467-487 (LLMMFLISPGAAGGSLLLMGL) traverse the membrane as a helical segment. Residues 488 to 740 (LSALLTARGG…LLRPRGGPGY (253 aa)) are Extracellular-facing. The disordered stretch occupies residues 645 to 678 (PAFSEPAEGTREGGSPALSTLFPPPRAPGSPRAL). The chain crosses the membrane as a helical span at residues 741–761 (VDVCGLFLLQMATILSMVPAW). At 762-914 (HSARLRIFLC…GVTPVTCTDL (153 aa)) the chain is on the cytoplasmic side. The disordered stretch occupies residues 843–864 (QQGRGTGGGPGGPEGRDGEEGP). Residues 846–855 (RGTGGGPGGP) are compositionally biased toward gly residues.

The protein belongs to the SLC12A transporter family. In terms of assembly, interacts with SLC12A1.

It is found in the cell membrane. The protein localises to the lysosome membrane. May be an inhibitor of SLC12A1. Seems to correspond to a subunit of a multimeric transport system and thus, additional subunits may be required for its function. May play a role in lysosomal ion flux and osmoregulation. The chain is Solute carrier family 12 member 9 (Slc12a9) from Rattus norvegicus (Rat).